Reading from the N-terminus, the 362-residue chain is UPF0324 membrane protein YPO1307/y2878/YP_1285 (362 aa).

A run of 9 helical transmembrane segments spans residues 21 to 38 (YIPG…ALNV), 48 to 70 (GLGA…YPWL), 102 to 124 (VADV…FILA), 139 to 161 (VMLI…EPVL), 168 to 190 (VAVA…PWLY), 240 to 257 (MIRV…SAYL), 278 to 300 (WFAV…AVWV), 305 to 327 (TLDT…IGSI), and 334 to 356 (PLLL…NLFV).

Belongs to the UPF0324 family.

It localises to the cell membrane. This chain is UPF0324 membrane protein YPO1307/y2878/YP_1285, found in Yersinia pestis.